The chain runs to 135 residues: Probable histone H2A.7 (135 aa).

It belongs to the histone H2A family. The nucleosome is a histone octamer containing two molecules each of H2A, H2B, H3 and H4 assembled in one H3-H4 heterotetramer and two H2A-H2B heterodimers. The octamer wraps approximately 147 bp of DNA.

It localises to the nucleus. The protein localises to the chromosome. Functionally, core component of nucleosome. Nucleosomes wrap and compact DNA into chromatin, limiting DNA accessibility to the cellular machineries which require DNA as a template. Histones thereby play a central role in transcription regulation, DNA repair, DNA replication and chromosomal stability. DNA accessibility is regulated via a complex set of post-translational modifications of histones, also called histone code, and nucleosome remodeling. The chain is Probable histone H2A.7 from Oryza sativa subsp. indica (Rice).